The following is a 318-amino-acid chain: Methionyl-tRNA formyltransferase (318 aa).

A (6S)-5,6,7,8-tetrahydrofolate-binding site is contributed by 113 to 116; sequence SLLP.

This sequence belongs to the Fmt family.

The enzyme catalyses L-methionyl-tRNA(fMet) + (6R)-10-formyltetrahydrofolate = N-formyl-L-methionyl-tRNA(fMet) + (6S)-5,6,7,8-tetrahydrofolate + H(+). In terms of biological role, attaches a formyl group to the free amino group of methionyl-tRNA(fMet). The formyl group appears to play a dual role in the initiator identity of N-formylmethionyl-tRNA by promoting its recognition by IF2 and preventing the misappropriation of this tRNA by the elongation apparatus. The protein is Methionyl-tRNA formyltransferase of Hahella chejuensis (strain KCTC 2396).